Consider the following 91-residue polypeptide: Dynein 8 kDa light chain, flagellar outer arm (91 aa).

This sequence belongs to the dynein light chain family. As to quaternary structure, consists of at least 3 heavy chains (alpha, beta and gamma), 2 intermediate chains and 8 light chains.

The protein resides in the cytoplasm. It is found in the cytoskeleton. The protein localises to the flagellum axoneme. In Chlamydomonas reinhardtii (Chlamydomonas smithii), this protein is Dynein 8 kDa light chain, flagellar outer arm.